The sequence spans 314 residues: tRNA pseudouridine synthase B (314 aa).

His43 serves as a coordination point for substrate. Asp48 serves as the catalytic Nucleophile. Residues Tyr76, Tyr179, and Leu200 each coordinate substrate.

The protein belongs to the pseudouridine synthase TruB family. Type 1 subfamily.

It catalyses the reaction uridine(55) in tRNA = pseudouridine(55) in tRNA. Responsible for synthesis of pseudouridine from uracil-55 in the psi GC loop of transfer RNAs. The protein is tRNA pseudouridine synthase B of Salmonella choleraesuis (strain SC-B67).